The following is a 113-amino-acid chain: Large ribosomal subunit protein uL22 (113 aa).

Belongs to the universal ribosomal protein uL22 family. In terms of assembly, part of the 50S ribosomal subunit.

This protein binds specifically to 23S rRNA; its binding is stimulated by other ribosomal proteins, e.g. L4, L17, and L20. It is important during the early stages of 50S assembly. It makes multiple contacts with different domains of the 23S rRNA in the assembled 50S subunit and ribosome. Its function is as follows. The globular domain of the protein is located near the polypeptide exit tunnel on the outside of the subunit, while an extended beta-hairpin is found that lines the wall of the exit tunnel in the center of the 70S ribosome. This is Large ribosomal subunit protein uL22 from Magnetococcus marinus (strain ATCC BAA-1437 / JCM 17883 / MC-1).